Here is a 218-residue protein sequence, read N- to C-terminus: MSFFDSYRKKMQMPSKEEVLPGRVQPIPTAAAHFVSGHPLKGPWPDGMKQVLFGMGCFWGAERLFWQVPGVYVTAVGYAGGITPNPTYEETCTGLTGHAEVVLVVYDPKVVTLNELLALFWEEHDPTQGMRQGNDIGTTYRSVIYTFNAVDRAVAEKSRDAYSQALASRGLGPVTTQIADAPDFYYAEDYHQQYLAKNPDGYCGLRGTDVSCPIPLAH.

C57 is an active-site residue.

Belongs to the MsrA Met sulfoxide reductase family.

The enzyme catalyses L-methionyl-[protein] + [thioredoxin]-disulfide + H2O = L-methionyl-(S)-S-oxide-[protein] + [thioredoxin]-dithiol. It carries out the reaction [thioredoxin]-disulfide + L-methionine + H2O = L-methionine (S)-S-oxide + [thioredoxin]-dithiol. Its function is as follows. Has an important function as a repair enzyme for proteins that have been inactivated by oxidation. Catalyzes the reversible oxidation-reduction of methionine sulfoxide in proteins to methionine. This Brucella suis biovar 1 (strain 1330) protein is Peptide methionine sulfoxide reductase MsrA.